Here is a 569-residue protein sequence, read N- to C-terminus: Glutamine--tRNA ligase (569 aa).

The segment at Met-1–Val-23 is disordered. Positions Pro-50–His-60 match the 'HIGH' region motif. ATP contacts are provided by residues Glu-51–Asn-53 and His-57–Ser-63. Residues Asp-83 and Tyr-228 each coordinate L-glutamine. ATP is bound by residues Thr-247 and Arg-277–Leu-278. Residues Ile-284–Arg-288 carry the 'KMSKS' region motif.

It belongs to the class-I aminoacyl-tRNA synthetase family. In terms of assembly, monomer.

Its subcellular location is the cytoplasm. The catalysed reaction is tRNA(Gln) + L-glutamine + ATP = L-glutaminyl-tRNA(Gln) + AMP + diphosphate. This chain is Glutamine--tRNA ligase, found in Pseudomonas syringae pv. tomato (strain ATCC BAA-871 / DC3000).